We begin with the raw amino-acid sequence, 388 residues long: Serine/threonine-protein phosphatase sitA (388 aa).

Mn(2+) is bound by residues Asp67 and His69. Residues 86-146 are disordered; the sequence is PDGSEAEAPK…SQRDRSSSSG (61 aa). Mn(2+) is bound by residues Asp161 and Asn193. His194 acts as the Proton donor in catalysis. Positions 243 and 317 each coordinate Mn(2+).

Belongs to the PPP phosphatase family. PP-6 (PP-V) subfamily. Mn(2+) is required as a cofactor.

It carries out the reaction O-phospho-L-threonyl-[protein] + H2O = L-threonyl-[protein] + phosphate. Functionally, protein phosphatase that acts as a modulator of pkcA/mpkA activity involved in the cell wall integrity pathway. Plays an important role in regulation of adhesion, cell wall integrity, biofilm formation, and virulence. The polypeptide is Serine/threonine-protein phosphatase sitA (Aspergillus fumigatus (strain ATCC MYA-4609 / CBS 101355 / FGSC A1100 / Af293) (Neosartorya fumigata)).